A 182-amino-acid polypeptide reads, in one-letter code: Peptide methionine sulfoxide reductase MsrA (182 aa).

Residue C13 is part of the active site.

This sequence belongs to the MsrA Met sulfoxide reductase family.

It carries out the reaction L-methionyl-[protein] + [thioredoxin]-disulfide + H2O = L-methionyl-(S)-S-oxide-[protein] + [thioredoxin]-dithiol. The enzyme catalyses [thioredoxin]-disulfide + L-methionine + H2O = L-methionine (S)-S-oxide + [thioredoxin]-dithiol. In terms of biological role, has an important function as a repair enzyme for proteins that have been inactivated by oxidation. Catalyzes the reversible oxidation-reduction of methionine sulfoxide in proteins to methionine. The sequence is that of Peptide methionine sulfoxide reductase MsrA from Mycobacterium bovis (strain ATCC BAA-935 / AF2122/97).